A 466-amino-acid polypeptide reads, in one-letter code: 55 kDa erythrocyte membrane protein (466 aa).

Residue Thr-2 is modified to N-acetylthreonine. Residues Ser-13 and Ser-19 each carry the phosphoserine modification. Position 49 is a phosphothreonine (Thr-49). Ser-52, Ser-57, and Ser-110 each carry phosphoserine. The region spanning 71 to 152 (LIQFEKVTEE…MISLKVIPNQ (82 aa)) is the PDZ domain. An SH3 domain is found at 158-228 (ALQMFMRAQF…PSPELQEWRV (71 aa)). Ser-243 bears the Phosphoserine mark. The segment at 268-466 (VVSYEEVVRL…PQWVPVSWVY (199 aa)) is interaction with PALS1. The Guanylate kinase-like domain occupies 282-451 (RKTLVLIGAS…TLKKLQEAFD (170 aa)).

Belongs to the MAGUK family. Heterodimer with PALS1. Interacts with DLG5 and NF2. Interacts (via guanylate kinase-like domain) with WHRN (via third PDZ domain). In terms of processing, palmitoylated. As to expression, ubiquitous.

It localises to the cell membrane. It is found in the cell projection. The protein resides in the stereocilium. Its function is as follows. Essential regulator of neutrophil polarity. Regulates neutrophil polarization by regulating AKT1 phosphorylation through a mechanism that is independent of PIK3CG activity. This is 55 kDa erythrocyte membrane protein (MPP1) from Homo sapiens (Human).